A 264-amino-acid polypeptide reads, in one-letter code: Indole-3-glycerol phosphate synthase (264 aa).

This sequence belongs to the TrpC family.

It carries out the reaction 1-(2-carboxyphenylamino)-1-deoxy-D-ribulose 5-phosphate + H(+) = (1S,2R)-1-C-(indol-3-yl)glycerol 3-phosphate + CO2 + H2O. It functions in the pathway amino-acid biosynthesis; L-tryptophan biosynthesis; L-tryptophan from chorismate: step 4/5. This is Indole-3-glycerol phosphate synthase from Lactococcus lactis subsp. cremoris (strain MG1363).